The sequence spans 83 residues: Small ribosomal subunit protein bS16 (83 aa).

It belongs to the bacterial ribosomal protein bS16 family.

The chain is Small ribosomal subunit protein bS16 from Polaromonas sp. (strain JS666 / ATCC BAA-500).